We begin with the raw amino-acid sequence, 231 residues long: 5'-methylthioadenosine/S-adenosylhomocysteine nucleosidase (231 aa).

The Proton acceptor role is filled by glutamate 12. Substrate is bound by residues glycine 78, valine 153, and 174 to 175 (ME). The active-site Proton donor is aspartate 198.

Belongs to the PNP/UDP phosphorylase family. MtnN subfamily.

It catalyses the reaction S-adenosyl-L-homocysteine + H2O = S-(5-deoxy-D-ribos-5-yl)-L-homocysteine + adenine. It carries out the reaction S-methyl-5'-thioadenosine + H2O = 5-(methylsulfanyl)-D-ribose + adenine. The catalysed reaction is 5'-deoxyadenosine + H2O = 5-deoxy-D-ribose + adenine. Its pathway is amino-acid biosynthesis; L-methionine biosynthesis via salvage pathway; S-methyl-5-thio-alpha-D-ribose 1-phosphate from S-methyl-5'-thioadenosine (hydrolase route): step 1/2. Catalyzes the irreversible cleavage of the glycosidic bond in both 5'-methylthioadenosine (MTA) and S-adenosylhomocysteine (SAH/AdoHcy) to adenine and the corresponding thioribose, 5'-methylthioribose and S-ribosylhomocysteine, respectively. Also cleaves 5'-deoxyadenosine, a toxic by-product of radical S-adenosylmethionine (SAM) enzymes, into 5-deoxyribose and adenine. This chain is 5'-methylthioadenosine/S-adenosylhomocysteine nucleosidase, found in Aliivibrio salmonicida (strain LFI1238) (Vibrio salmonicida (strain LFI1238)).